A 449-amino-acid polypeptide reads, in one-letter code: Tubulin alpha-1C chain (449 aa).

The MREC motif motif lies at 1 to 4; sequence MREC. Gln-11 is a GTP binding site. Lys-40 is subject to N6-acetyllysine. 7 residues coordinate GTP: Glu-71, Ser-140, Gly-144, Thr-145, Thr-179, Asn-206, and Asn-228. Glu-71 contacts Mg(2+). Residue Glu-254 is part of the active site. Tyr-282 carries the 3'-nitrotyrosine modification. Residues 429-449 are disordered; it reads EKDYEEVGADSAEGDDEGDEY. Residues 431–449 are compositionally biased toward acidic residues; that stretch reads DYEEVGADSAEGDDEGDEY. Position 432 is a phosphotyrosine (Tyr-432). Ser-439 carries the post-translational modification Phosphoserine. 3'-nitrotyrosine is present on Tyr-449.

This sequence belongs to the tubulin family. As to quaternary structure, dimer of alpha and beta chains. A typical microtubule is a hollow water-filled tube with an outer diameter of 25 nm and an inner diameter of 15 nM. Alpha-beta heterodimers associate head-to-tail to form protofilaments running lengthwise along the microtubule wall with the beta-tubulin subunit facing the microtubule plus end conferring a structural polarity. Microtubules usually have 13 protofilaments but different protofilament numbers can be found in some organisms and specialized cells. It depends on Mg(2+) as a cofactor. Some glutamate residues at the C-terminus are polyglycylated, resulting in polyglycine chains on the gamma-carboxyl group. Glycylation is mainly limited to tubulin incorporated into axonemes (cilia and flagella) whereas glutamylation is prevalent in neuronal cells, centrioles, axonemes, and the mitotic spindle. Both modifications can coexist on the same protein on adjacent residues, and lowering polyglycylation levels increases polyglutamylation, and reciprocally. Cilia and flagella glycylation is required for their stability and maintenance. Flagella glycylation controls sperm motility. In terms of processing, some glutamate residues at the C-terminus are polyglutamylated, resulting in polyglutamate chains on the gamma-carboxyl group. Polyglutamylation plays a key role in microtubule severing by spastin (SPAST). SPAST preferentially recognizes and acts on microtubules decorated with short polyglutamate tails: severing activity by SPAST increases as the number of glutamates per tubulin rises from one to eight, but decreases beyond this glutamylation threshold. Glutamylation is also involved in cilia motility. Post-translationally, acetylation of alpha chains at Lys-40 is located inside the microtubule lumen. This modification has been correlated with increased microtubule stability, intracellular transport and ciliary assembly. Methylation of alpha chains at Lys-40 is found in mitotic microtubules and is required for normal mitosis and cytokinesis contributing to genomic stability. In terms of processing, nitration of Tyr-449 is irreversible and interferes with normal dynein intracellular distribution. Post-translationally, undergoes a tyrosination/detyrosination cycle, the cyclic removal and re-addition of a C-terminal tyrosine residue by the enzymes tubulin tyrosine carboxypeptidase (MATCAP1, VASH1 or VASH2) and tubulin tyrosine ligase (TTL), respectively. Tyrosination promotes microtubule interaction with CAP-Gly domain-containing proteins such as CLIP1, CLIP2 and DCTN1. Tyrosination regulates the initiation of dynein-dynactin motility via interaction with DCTN1, which brings the dynein-dynactin complex into contact with microtubules. In neurons, tyrosinated tubulins mediate the initiation of retrograde vesicle transport. In terms of processing, detyrosination is involved in metaphase plate congression by guiding chromosomes during mitosis: detyrosination promotes interaction with CENPE, promoting pole-proximal transport of chromosomes toward the equator. Detyrosination increases microtubules-dependent mechanotransduction in dystrophic cardiac and skeletal muscle. In cardiomyocytes, detyrosinated microtubules are required to resist to contractile compression during contraction: detyrosination promotes association with desmin (DES) at force-generating sarcomeres, leading to buckled microtubules and mechanical resistance to contraction.

Its subcellular location is the cytoplasm. The protein localises to the cytoskeleton. The enzyme catalyses GTP + H2O = GDP + phosphate + H(+). Its function is as follows. Tubulin is the major constituent of microtubules, a cylinder consisting of laterally associated linear protofilaments composed of alpha- and beta-tubulin heterodimers. Microtubules grow by the addition of GTP-tubulin dimers to the microtubule end, where a stabilizing cap forms. Below the cap, tubulin dimers are in GDP-bound state, owing to GTPase activity of alpha-tubulin. The polypeptide is Tubulin alpha-1C chain (TUBA1C) (Bos taurus (Bovine)).